The sequence spans 299 residues: Virginiamycin B lyase (299 aa).

Substrate is bound at residue histidine 232. Glutamate 272 contacts Mg(2+). Histidine 274 serves as the catalytic Proton acceptor. Glutamate 288 lines the Mg(2+) pocket.

The protein belongs to the Vgb family. In terms of assembly, monomer. The cofactor is Mg(2+).

Functionally, inactivates the type B streptogramin antibiotics by linearizing the lactone ring at the ester linkage, generating a free phenylglycine carboxylate and converting the threonyl moiety into 2-amino-butenoic acid. The polypeptide is Virginiamycin B lyase (vgb) (Streptomyces coelicolor (strain ATCC BAA-471 / A3(2) / M145)).